Consider the following 656-residue polypeptide: UvrABC system protein B (656 aa).

The 386-residue stretch at 29–414 folds into the Helicase ATP-binding domain; the sequence is KLSEFKTKQQ…SLSQNNVIEQ (386 aa). 42 to 49 contributes to the ATP binding site; it reads GATGTGKT. A Beta-hairpin motif is present at residues 95 to 118; the sequence is YFDFYQPEAYLPSKGIYIEKSATV. The region spanning 434–596 is the Helicase C-terminal domain; the sequence is QVEDLIEEII…KTPKTVVKPL (163 aa). Positions 614–649 constitute a UVR domain; sequence AALIKQLTKEMKKAAANQNYELAIEIRDSIFELEKE.

This sequence belongs to the UvrB family. Forms a heterotetramer with UvrA during the search for lesions. Interacts with UvrC in an incision complex.

The protein localises to the cytoplasm. The UvrABC repair system catalyzes the recognition and processing of DNA lesions. A damage recognition complex composed of 2 UvrA and 2 UvrB subunits scans DNA for abnormalities. Upon binding of the UvrA(2)B(2) complex to a putative damaged site, the DNA wraps around one UvrB monomer. DNA wrap is dependent on ATP binding by UvrB and probably causes local melting of the DNA helix, facilitating insertion of UvrB beta-hairpin between the DNA strands. Then UvrB probes one DNA strand for the presence of a lesion. If a lesion is found the UvrA subunits dissociate and the UvrB-DNA preincision complex is formed. This complex is subsequently bound by UvrC and the second UvrB is released. If no lesion is found, the DNA wraps around the other UvrB subunit that will check the other stand for damage. In Mycoplasma genitalium (strain ATCC 33530 / DSM 19775 / NCTC 10195 / G37) (Mycoplasmoides genitalium), this protein is UvrABC system protein B.